We begin with the raw amino-acid sequence, 257 residues long: Baramicin A1 (257 aa).

Residues Met-1–Ala-19 form the signal peptide. Positions Glu-20 to Pro-21 are excised as a propeptide. At Gln-22 the chain carries Pyrrolidone carboxylic acid. Positions Gly-95–Gln-122 are disordered. A glycan (N-linked (GlcNAc...) asparagine) is linked at Asn-97. Positions Arg-118–Pro-121 are excised as a propeptide. At Gln-122 the chain carries Pyrrolidone carboxylic acid. Residues Arg-145–Pro-148 constitute a propeptide that is removed on maturation. Gln-149 bears the Pyrrolidone carboxylic acid mark. Positions Arg-172–Pro-175 are excised as a propeptide. Gln-176 bears the Pyrrolidone carboxylic acid mark. A propeptide spanning residues Arg-199–Asp-204 is cleaved from the precursor. N-linked (GlcNAc...) asparagine glycosylation occurs at Asn-225.

Proteolytically cleaved. As to expression, hemolymph (at protein level).

It is found in the secreted. Functionally, secreted immune-induced peptides induced by Toll signaling. Has a significant role in resistance to infection by the entomopathogenic fungus B.bassiana R444 and weak antifungal activity against M.rileyi PHP1705. In adult males, activity appears to be important for neuromuscular processes that mediate correct wing posture upon Toll activation. This Drosophila melanogaster (Fruit fly) protein is Baramicin A1.